The primary structure comprises 828 residues: Periplasmic nitrate reductase (828 aa).

The tat-type signal signal peptide spans 1–31 (MKLSRRSFMKANAVAAAAAAAGLSVPGVARA). Residues 39–95 (IKWDKAPCRFCGTGCGVLVGTQQGRIVACQGDPDAPVNRGLNCIKGYFLPKIMYGKD) form the 4Fe-4S Mo/W bis-MGD-type domain. Cysteine 46, cysteine 49, cysteine 53, and cysteine 81 together coordinate [4Fe-4S] cluster. Mo-bis(molybdopterin guanine dinucleotide)-binding positions include lysine 83, glutamine 150, asparagine 175, cysteine 179, 212–219 (WGSNMAEM), 243–247 (STFQH), 262–264 (QSD), methionine 372, glutamine 376, asparagine 482, 508–509 (SD), lysine 531, aspartate 558, and 718–727 (TGRVLEHWHT). Residue phenylalanine 794 participates in substrate binding. The Mo-bis(molybdopterin guanine dinucleotide) site is built by asparagine 802 and lysine 819.

It belongs to the prokaryotic molybdopterin-containing oxidoreductase family. NasA/NapA/NarB subfamily. As to quaternary structure, component of the periplasmic nitrate reductase NapAB complex composed of NapA and NapB. [4Fe-4S] cluster is required as a cofactor. It depends on Mo-bis(molybdopterin guanine dinucleotide) as a cofactor. Post-translationally, predicted to be exported by the Tat system. The position of the signal peptide cleavage has not been experimentally proven.

It is found in the periplasm. The enzyme catalyses 2 Fe(II)-[cytochrome] + nitrate + 2 H(+) = 2 Fe(III)-[cytochrome] + nitrite + H2O. Functionally, catalytic subunit of the periplasmic nitrate reductase complex NapAB. Receives electrons from NapB and catalyzes the reduction of nitrate to nitrite. The polypeptide is Periplasmic nitrate reductase (Citrobacter koseri (strain ATCC BAA-895 / CDC 4225-83 / SGSC4696)).